Reading from the N-terminus, the 342-residue chain is Anthranilate phosphoribosyltransferase (342 aa).

5-phospho-alpha-D-ribose 1-diphosphate contacts are provided by residues Gly83, 86 to 87 (GD), Thr91, 93 to 96 (NIST), 111 to 119 (KHGGRSVSS), and Ala123. Gly83 serves as a coordination point for anthranilate. Ser95 is a Mg(2+) binding site. Arg169 contributes to the anthranilate binding site. 2 residues coordinate Mg(2+): Asp228 and Glu229.

Belongs to the anthranilate phosphoribosyltransferase family. Homodimer. Mg(2+) serves as cofactor.

It carries out the reaction N-(5-phospho-beta-D-ribosyl)anthranilate + diphosphate = 5-phospho-alpha-D-ribose 1-diphosphate + anthranilate. The protein operates within amino-acid biosynthesis; L-tryptophan biosynthesis; L-tryptophan from chorismate: step 2/5. In terms of biological role, catalyzes the transfer of the phosphoribosyl group of 5-phosphorylribose-1-pyrophosphate (PRPP) to anthranilate to yield N-(5'-phosphoribosyl)-anthranilate (PRA). This is Anthranilate phosphoribosyltransferase from Neisseria gonorrhoeae (strain ATCC 700825 / FA 1090).